The sequence spans 64 residues: Putative calcium channel toxin Tx758 (64 aa).

A signal peptide spans 1 to 18; it reads MSTFVIVFLLLTAVLCHA. A propeptide spanning residues 19-27 is cleaved from the precursor; the sequence is EPALDETAR. Disulfide bonds link Cys-29–Cys-43, Cys-36–Cys-49, and Cys-42–Cys-58.

Belongs to the scorpion calcin-like family. Expressed by the venom gland.

The protein localises to the secreted. Functionally, may increase intracellular calcium release through the activation of nuclear inositol 1,4,5-trisphosphate receptors (ITPR) of cardiomyocytes, thereby causing an increase in the contraction frequency of these cells. The protein is Putative calcium channel toxin Tx758 of Buthus israelis (Israeli scorpion).